Consider the following 876-residue polypeptide: AP-5 complex subunit beta-1 (876 aa).

Probably part of the adaptor protein complex 5 (AP-5), a tetramer composed of AP5B1, AP5M1, AP5S1 and AP5Z1. Interacts with ZFYVE26 and SPG11.

Its function is as follows. As part of AP-5, a probable fifth adaptor protein complex, it may be involved in endosomal transport. This chain is AP-5 complex subunit beta-1 (Ap5b1), found in Rattus norvegicus (Rat).